Here is a 181-residue protein sequence, read N- to C-terminus: ATP-dependent protease subunit HslV (181 aa).

Thr9 is a catalytic residue. Na(+) is bound by residues Ala166, Cys169, and Thr172.

Belongs to the peptidase T1B family. HslV subfamily. A double ring-shaped homohexamer of HslV is capped on each side by a ring-shaped HslU homohexamer. The assembly of the HslU/HslV complex is dependent on binding of ATP.

The protein localises to the cytoplasm. It carries out the reaction ATP-dependent cleavage of peptide bonds with broad specificity.. Its activity is regulated as follows. Allosterically activated by HslU binding. Protease subunit of a proteasome-like degradation complex believed to be a general protein degrading machinery. This chain is ATP-dependent protease subunit HslV, found in Staphylococcus aureus (strain bovine RF122 / ET3-1).